Consider the following 1679-residue polypeptide: Furin-like protease 2 (1679 aa).

Over residues 1-10 the composition is skewed to polar residues; it reads MSNTTRSSRV. Residues 1–42 are disordered; it reads MSNTTRSSRVTIGRIGTTPQITDPWSSGLEKQRPSRCGGPKS. 3 N-linked (GlcNAc...) asparagine glycosylation sites follow: N3, N109, and N130. A disordered region spans residues 139-164; that stretch reads VSSLHSSRRTNPPSSSSSSSSNVDVD. A compositionally biased stretch (low complexity) spans 147 to 160; that stretch reads RTNPPSSSSSSSSN. N205 carries N-linked (GlcNAc...) asparagine glycosylation. Residues 383–705 enclose the Peptidase S8 domain; it reads QWYLNGGAKD…YGLMDAGAMV (323 aa). The active-site Charge relay system is the D417. The segment at 424 to 456 is disordered; sequence HPDLAQNYDPEASFDINGNDSDPTPQDNGDNKH. A compositionally biased stretch (polar residues) spans 439–451; sequence INGNDSDPTPQDN. N-linked (GlcNAc...) asparagine glycosylation occurs at N442. H456 serves as the catalytic Charge relay system. Disulfide bonds link C473–C629 and C565–C595. Residue N480 is glycosylated (N-linked (GlcNAc...) asparagine). S637 functions as the Charge relay system in the catalytic mechanism. Residues 714 to 852 enclose the P/Homo B domain; that stretch reads VPPQHICKSR…QLIFYGTSTQ (139 aa). A disulfide bond links C720 and C748. N927 is a glycosylation site (N-linked (GlcNAc...) asparagine). 10 FU repeats span residues 961–1006, 1009–1056, 1060–1104, 1107–1152, 1156–1204, 1208–1253, 1256–1299, 1301–1346, 1348–1393, and 1396–1443; these read KKIL…RSFP, VGIC…GYFE, NRTC…DTYE, DNKC…GFYA, RLEC…SEFY, EGQC…GFFV, GSLC…GYYS, RGIC…GFYK, DFGC…QYYD, and SATC…QTLA. Residue N1060 is glycosylated (N-linked (GlcNAc...) asparagine). An N-linked (GlcNAc...) asparagine glycan is attached at N1181. N-linked (GlcNAc...) asparagine glycans are attached at residues N1274 and N1277. N-linked (GlcNAc...) asparagine glycosylation is present at N1439. A helical membrane pass occupies residues 1512–1532; it reads AIAVAICLLIITIFSIIFAVL. Residues 1533-1679 lie on the Cytoplasmic side of the membrane; the sequence is QRNSNHVSRN…STTSRTNIRS (147 aa). Residues 1660-1679 are disordered; it reads TNAERKNHPSSTTSRTNIRS. Polar residues predominate over residues 1668–1679; the sequence is PSSTTSRTNIRS.

It belongs to the peptidase S8 family. Furin subfamily. Ca(2+) is required as a cofactor. Transient expression in a subset of central nervous system neurons during embryonic stages 12-13. Expression in developing tracheal tree from stage 13 to end of embryonic development.

Its subcellular location is the membrane. The catalysed reaction is Release of mature proteins from their proproteins by cleavage of -Arg-Xaa-Yaa-Arg-|-Zaa- bonds, where Xaa can be any amino acid and Yaa is Arg or Lys. Releases albumin, complement component C3 and von Willebrand factor from their respective precursors.. In terms of biological role, furin is likely to represent the ubiquitous endoprotease activity within constitutive secretory pathways and capable of cleavage at the RX(K/R)R consensus motif. The protein is Furin-like protease 2 (Fur2) of Drosophila melanogaster (Fruit fly).